A 314-amino-acid polypeptide reads, in one-letter code: NF-kappa-B inhibitor alpha (314 aa).

The disordered stretch occupies residues 1–39 (MFQPAGHGQDWAMEGPRDGLKKERLVDDRHDSGLDSMKD). Residues 15 to 39 (GPRDGLKKERLVDDRHDSGLDSMKD) show a composition bias toward basic and acidic residues. Residue lysine 21 forms a Glycyl lysine isopeptide (Lys-Gly) (interchain with G-Cter in SUMO); alternate linkage. A Glycyl lysine isopeptide (Lys-Gly) (interchain with G-Cter in ubiquitin); alternate cross-link involves residue lysine 21. Lysine 22 is covalently cross-linked (Glycyl lysine isopeptide (Lys-Gly) (interchain with G-Cter in ubiquitin)). A Destruction motif motif is present at residues 30 to 36 (HDSGLDS). The residue at position 32 (serine 32) is a Phosphoserine; by IKKA and IKKB. At serine 36 the chain carries Phosphoserine; by IKKA, IKKB, IKKE and TBK1. Tyrosine 42 is subject to Phosphotyrosine; by Tyr-kinases. The short motif at 45–54 (MVKELREIRL) is the Nuclear export signal element. The short motif at 110–120 (LQQTPLHLAVI) is the Nuclear import signal element. ANK repeat units follow at residues 110–139 (LQQT…DPEL), 143–172 (RGNT…PQHL), 182–211 (NGHT…DVNA), and 216–245 (NGRT…DVNR). (3S)-3-hydroxyasparagine; by HIF1AN occurs at positions 210 and 244. 2 positions are modified to phosphoserine; by CK2: serine 283 and serine 288. Threonine 291 carries the post-translational modification Phosphothreonine; by CK2. Serine 293 is subject to Phosphoserine; by CK2. The residue at position 296 (threonine 296) is a Phosphothreonine.

It belongs to the NF-kappa-B inhibitor family. Interacts with RELA; the interaction requires the nuclear import signal. Part of a 70-90 kDa complex at least consisting of CHUK, IKBKB, NFKBIA, RELA, ELP1 and MAP3K14. Interacts with NKIRAS1 and NKIRAS2. Interacts with RWDD3; the interaction enhances sumoylation. Interacts with PRMT2. Interacts with PRKACA in platelets; this interaction is disrupted by thrombin and collagen. Interacts with MEFV. Interacts with DDRGK1; positively regulates NFKBIA phosphorylation and degradation. Interacts with HNRNPA2B1; the interaction may be mediated by the RRM2 domain of HNRNPA2B1, and HNRNPA2B1 may interact simultaneously with FAM76B and either NFKBIA or NFKBIE to form a complex. In terms of processing, phosphorylated at Ser-32 and Ser-36 by IKKA/CHUK and IKKB/IKBKB; disables inhibition of NF-kappa-B DNA-binding activity. Phosphorylation at positions 32 and 36 is prerequisite to recognition by the SCF(FBXW11) and SCF(BTRC) complexes, leading to polyubiquitination and subsequent degradation. Polyubiquitinated at Lys-21 and/or Lys-22 following phosphorylation at Ser-32 and Ser-36. Monoubiquitinated at Lys-21 and/or Lys-22 by UBE2D3. Ubiquitin chain elongation is then performed by CDC34 in cooperation with the SCF(FBXW11) E3 ligase complex, building ubiquitin chains from the UBE2D3-primed NFKBIA-linked ubiquitin. The resulting polyubiquitination leads to protein degradation. Also ubiquitinated by the SCF(BTRC) complex following stimulus-dependent phosphorylation at Ser-32 and Ser-36. Deubiquitinated by USP38, leading to NF-kappa-B inhibition. Post-translationally, sumoylated; sumoylation requires the presence of the nuclear import signal. Sumoylation blocks ubiquitination and proteasome-mediated degradation of the protein thereby increasing the protein stability. In terms of processing, hydroxylated by HIF1AN.

It localises to the cytoplasm. Its subcellular location is the nucleus. Its function is as follows. Inhibits the activity of dimeric NF-kappa-B/REL complexes by trapping REL (RELA/p65 and NFKB1/p50) dimers in the cytoplasm by masking their nuclear localization signals. On cellular stimulation by immune and pro-inflammatory responses, becomes phosphorylated promoting ubiquitination and degradation, enabling the dimeric RELA to translocate to the nucleus and activate transcription. The chain is NF-kappa-B inhibitor alpha (Nfkbia) from Rattus norvegicus (Rat).